The following is a 294-amino-acid chain: Ribosomal protein L11 methyltransferase (294 aa).

Positions 144, 165, 187, and 229 each coordinate S-adenosyl-L-methionine.

This sequence belongs to the methyltransferase superfamily. PrmA family.

It localises to the cytoplasm. The catalysed reaction is L-lysyl-[protein] + 3 S-adenosyl-L-methionine = N(6),N(6),N(6)-trimethyl-L-lysyl-[protein] + 3 S-adenosyl-L-homocysteine + 3 H(+). Methylates ribosomal protein L11. This Pseudomonas paraeruginosa (strain DSM 24068 / PA7) (Pseudomonas aeruginosa (strain PA7)) protein is Ribosomal protein L11 methyltransferase.